The sequence spans 92 residues: Small ribosomal subunit protein uS19 (92 aa).

It belongs to the universal ribosomal protein uS19 family.

Its function is as follows. Protein S19 forms a complex with S13 that binds strongly to the 16S ribosomal RNA. The protein is Small ribosomal subunit protein uS19 of Mycoplasmopsis synoviae (strain 53) (Mycoplasma synoviae).